We begin with the raw amino-acid sequence, 745 residues long: Chitin synthase D (745 aa).

A run of 5 helical transmembrane segments spans residues 26–46 (LAHR…PVHL), 55–75 (VLML…IPWL), 412–432 (TTAL…SSIN), 434–454 (LPVG…FYLG), and 464–484 (LFPL…VYGI). Disordered stretches follow at residues 613–635 (TGDN…SLHQ) and 672–745 (ILPH…ESMV). The span at 707 to 720 (NASTRGSMEGNTPE) shows a compositional bias: polar residues.

This sequence belongs to the chitin synthase family. Class VI subfamily.

Its subcellular location is the cell membrane. The enzyme catalyses [(1-&gt;4)-N-acetyl-beta-D-glucosaminyl](n) + UDP-N-acetyl-alpha-D-glucosamine = [(1-&gt;4)-N-acetyl-beta-D-glucosaminyl](n+1) + UDP + H(+). Its function is as follows. Polymerizes chitin, a structural polymer of the cell wall and septum, by transferring the sugar moiety of UDP-GlcNAc to the non-reducing end of the growing chitin polymer. The protein is Chitin synthase D (chsD) of Aspergillus fumigatus (strain ATCC MYA-4609 / CBS 101355 / FGSC A1100 / Af293) (Neosartorya fumigata).